A 568-amino-acid chain; its full sequence is UPF0313 protein FN0734 (568 aa).

A Radical SAM core domain is found at 289–562 (ALDTIKYSVT…KQKQKDIVTE (274 aa)). C303, C307, and C310 together coordinate [4Fe-4S] cluster. The segment at 546–568 (VEKDNGKKQKQKDIVTEKRKNRK) is disordered.

This sequence belongs to the UPF0313 family. [4Fe-4S] cluster serves as cofactor.

The protein is UPF0313 protein FN0734 of Fusobacterium nucleatum subsp. nucleatum (strain ATCC 25586 / DSM 15643 / BCRC 10681 / CIP 101130 / JCM 8532 / KCTC 2640 / LMG 13131 / VPI 4355).